A 277-amino-acid chain; its full sequence is Xyloglucan endotransglucosylase/hydrolase protein 19 (277 aa).

The first 21 residues, 1-21 (MKSFTFLILFLFAAQSISVYA), serve as a signal peptide directing secretion. Residues 22–213 (GSFHKDVKIH…WSKAPFTAYY (192 aa)) form the GH16 domain. The active-site Nucleophile is E99. E103 serves as the catalytic Proton donor. Xyloglucan is bound at residue E103. N-linked (GlcNAc...) asparagine glycosylation is present at N107. Residues 116–118 (HTN), 126–128 (DKE), 192–193 (HW), and G197 contribute to the xyloglucan site. Disulfide bonds link C221/C230 and C262/C276. R267 serves as a coordination point for xyloglucan.

This sequence belongs to the glycosyl hydrolase 16 family. XTH group 2 subfamily. Contains at least one intrachain disulfide bond essential for its enzymatic activity. In terms of tissue distribution, root specific.

It is found in the secreted. The protein localises to the cell wall. Its subcellular location is the extracellular space. It localises to the apoplast. The catalysed reaction is breaks a beta-(1-&gt;4) bond in the backbone of a xyloglucan and transfers the xyloglucanyl segment on to O-4 of the non-reducing terminal glucose residue of an acceptor, which can be a xyloglucan or an oligosaccharide of xyloglucan.. Functionally, possesses xyloglucan endotransglucosylase (XET) activity in vitro. Does not possess xyloglucan endohydrolysis (XEH) activity. Cleaves and religates xyloglucan polymers, an essential constituent of the primary cell wall, and thereby participates in cell wall construction of growing tissues. Involved in cell proliferation in the tissue reunion process of wounded inflorescence stems. Maybe a downstream target of NAC071 as a consequence of auxin action in wounded stems. This chain is Xyloglucan endotransglucosylase/hydrolase protein 19, found in Arabidopsis thaliana (Mouse-ear cress).